A 95-amino-acid polypeptide reads, in one-letter code: CRISPR-associated endoribonuclease Cas2 1 (95 aa).

Position 8 (Asp-8) interacts with Mg(2+).

This sequence belongs to the CRISPR-associated endoribonuclease Cas2 protein family. Homodimer, forms a heterotetramer with a Cas1 homodimer. Requires Mg(2+) as cofactor.

Functionally, CRISPR (clustered regularly interspaced short palindromic repeat), is an adaptive immune system that provides protection against mobile genetic elements (viruses, transposable elements and conjugative plasmids). CRISPR clusters contain sequences complementary to antecedent mobile elements and target invading nucleic acids. CRISPR clusters are transcribed and processed into CRISPR RNA (crRNA). Functions as a ssRNA-specific endoribonuclease. Involved in the integration of spacer DNA into the CRISPR cassette. In Pyrobaculum aerophilum (strain ATCC 51768 / DSM 7523 / JCM 9630 / CIP 104966 / NBRC 100827 / IM2), this protein is CRISPR-associated endoribonuclease Cas2 1.